A 347-amino-acid chain; its full sequence is Acetylglutamate kinase, chloroplastic (347 aa).

A chloroplast-targeting transit peptide spans 1-50 (MATVTSNASPKSFSFTVSNPFKTLIPNKSPSLCYPTRNKNHHRLGFSIKA). T51 bears the N-acetylthreonine mark. 94–95 (GA) serves as a coordination point for ATP. N-acetyl-L-glutamate-binding positions include G126, R148, and 242–245 (NINA). K260 is an L-arginine binding site. Residues 265-266 (TD) and L271 contribute to the ATP site. K282 is an L-arginine binding site. 297–305 (KVAGGMIPK) lines the ATP pocket. L-arginine contacts are provided by residues 334-337 (EIMS) and G342.

The protein belongs to the acetylglutamate kinase family. ArgB subfamily. In terms of assembly, interacts with GLB1. Interaction is dependent of MgATP and inhibited by 2-oxoglutarate, arginine, glutamate, citrate, and oxaloacetate.

It localises to the plastid. It is found in the chloroplast stroma. The enzyme catalyses N-acetyl-L-glutamate + ATP = N-acetyl-L-glutamyl 5-phosphate + ADP. It participates in amino-acid biosynthesis; L-arginine biosynthesis; N(2)-acetyl-L-ornithine from L-glutamate: step 2/4. Inhibited by arginine. Inhibition is relieved by binding to GLB1. Its function is as follows. Involved in the arginine biosynthetic pathway via the intermediate compound ornithine. This Arabidopsis thaliana (Mouse-ear cress) protein is Acetylglutamate kinase, chloroplastic.